Consider the following 453-residue polypeptide: Allantoinase (453 aa).

Zn(2+) is bound by residues His-59, His-61, Lys-146, His-186, His-242, and Asp-315. Lys-146 carries the N6-carboxylysine modification.

It belongs to the metallo-dependent hydrolases superfamily. Allantoinase family. In terms of assembly, homotetramer. The cofactor is Zn(2+). In terms of processing, carboxylation allows a single lysine to coordinate two zinc ions.

It carries out the reaction (S)-allantoin + H2O = allantoate + H(+). It participates in nitrogen metabolism; (S)-allantoin degradation; allantoate from (S)-allantoin: step 1/1. Catalyzes the conversion of allantoin (5-ureidohydantoin) to allantoic acid by hydrolytic cleavage of the five-member hydantoin ring. This is Allantoinase from Salmonella paratyphi B (strain ATCC BAA-1250 / SPB7).